The primary structure comprises 195 residues: uncharacterized protein (195 aa).

4 consecutive transmembrane segments (helical) span residues 89–106, 111–128, 149–168, and 172–194; these read SWIS…PLLP, HLPL…VWKR, VKIS…VLLL, and LNAL…FLNI.

The protein resides in the cell membrane. This is an uncharacterized protein from Bacillus subtilis (strain 168).